Here is a 179-residue protein sequence, read N- to C-terminus: Large ribosomal subunit protein uL6 (179 aa).

The protein belongs to the universal ribosomal protein uL6 family. In terms of assembly, part of the 50S ribosomal subunit.

This protein binds to the 23S rRNA, and is important in its secondary structure. It is located near the subunit interface in the base of the L7/L12 stalk, and near the tRNA binding site of the peptidyltransferase center. The chain is Large ribosomal subunit protein uL6 from Gloeothece citriformis (strain PCC 7424) (Cyanothece sp. (strain PCC 7424)).